We begin with the raw amino-acid sequence, 290 residues long: Serpentine receptor class U-26 (290 aa).

Helical transmembrane passes span L31–L51, L70–L90, F112–V134, F158–I178, A185–V205, N213–I233, and M262–V282.

It belongs to the nematode receptor-like protein sru family.

The protein localises to the membrane. The polypeptide is Serpentine receptor class U-26 (sru-26) (Caenorhabditis elegans).